An 82-amino-acid chain; its full sequence is Small ribosomal subunit protein bS18 (82 aa).

The interval 1–20 (MAEVSSSTVRRPFHRRRKTC) is disordered.

This sequence belongs to the bacterial ribosomal protein bS18 family. As to quaternary structure, part of the 30S ribosomal subunit. Forms a tight heterodimer with protein bS6.

Its function is as follows. Binds as a heterodimer with protein bS6 to the central domain of the 16S rRNA, where it helps stabilize the platform of the 30S subunit. The chain is Small ribosomal subunit protein bS18 from Allorhizobium ampelinum (strain ATCC BAA-846 / DSM 112012 / S4) (Agrobacterium vitis (strain S4)).